The sequence spans 190 residues: dCTP deaminase (190 aa).

Residue 113–118 (KSTYAR) participates in dCTP binding. Glutamate 139 acts as the Proton donor/acceptor in catalysis. DCTP is bound by residues glutamine 158, tyrosine 172, lysine 181, and glutamine 182.

It belongs to the dCTP deaminase family. As to quaternary structure, homotrimer.

It carries out the reaction dCTP + H2O + H(+) = dUTP + NH4(+). It functions in the pathway pyrimidine metabolism; dUMP biosynthesis; dUMP from dCTP (dUTP route): step 1/2. Functionally, catalyzes the deamination of dCTP to dUTP. The sequence is that of dCTP deaminase from Chlamydia pneumoniae (Chlamydophila pneumoniae).